Reading from the N-terminus, the 813-residue chain is Sorting nexin-29 (813 aa).

The RUN domain occupies 36–180; that stretch reads SDSDSRVTCL…ILFAINIDNK (145 aa). Residues serine 268, serine 291, serine 292, serine 330, and serine 344 each carry the phosphoserine modification. The interval 269 to 299 is disordered; sequence FDDEEDEQNSGDVFKKTPGAGESSEDNSDRS. Positions 346–357 are enriched in acidic residues; sequence DDEDVDENEDDV. Residues 346 to 378 are disordered; the sequence is DDEDVDENEDDVYGNSSGRKHRGHSESPEKPLE. Phosphoserine is present on residues serine 445 and serine 450. The stretch at 466-545 forms a coiled coil; the sequence is TISELRQATV…VLKVQLKKYV (80 aa). Residue serine 639 is modified to Phosphoserine. Threonine 641 is subject to Phosphothreonine. Phosphoserine occurs at positions 642 and 646. The PX domain maps to 656 to 779; the sequence is ALINVWIPSV…PFFVDITPPG (124 aa). The segment at 778 to 813 is disordered; sequence PGEPVNSRPKAASRFPKLSRGQPRETRNVEPQSGDL.

The protein belongs to the sorting nexin family.

The protein is Sorting nexin-29 (SNX29) of Homo sapiens (Human).